Here is a 207-residue protein sequence, read N- to C-terminus: Melanocortin-2 receptor accessory protein 2 (207 aa).

The disordered stretch occupies residues 1–21; the sequence is MEMSAQRLASNRTSPQSPSNS. A compositionally biased stretch (polar residues) spans 7-21; it reads RLASNRTSPQSPSNS. Asparagine 11 carries an N-linked (GlcNAc...) asparagine glycan. A helical transmembrane segment spans residues 47–67; sequence IVIGFWVGLAVFVIFMFFVLT. Serine 91 is subject to Phosphoserine.

Belongs to the MRAP family. As to quaternary structure, homodimer and heterodimer. Forms antiparallel homodimers and heterodimers with MRAP. Interacts with MC1R, MC2R, MC3R and MC5R. Interacts with MC4R. In terms of tissue distribution, predominantly expressed in the brain, mainly in the pons and cerebellum but also in regions involved in energy homeostasis, such as the hypothalamus and brainstem.

It localises to the cell membrane. It is found in the endoplasmic reticulum membrane. Modulator of melanocortin receptor 4 (MC4R), a receptor involved in energy homeostasis. Plays a central role in the control of energy homeostasis and body weight regulation by increasing ligand-sensitivity of MC4R and MC4R-mediated generation of cAMP. May also act as a negative regulator of MC2R: competes with MRAP for binding to MC2R and impairs the binding of corticotropin (ACTH) to MC2R. May also regulate activity of other melanocortin receptors (MC1R, MC3R and MC5R); however, additional evidence is required in vivo. The chain is Melanocortin-2 receptor accessory protein 2 (Mrap2) from Mus musculus (Mouse).